Here is a 303-residue protein sequence, read N- to C-terminus: Putative S-adenosyl-L-methionine-dependent methyltransferase Mb1931c (303 aa).

S-adenosyl-L-methionine-binding positions include Asp-129 and 158 to 159 (DL).

The protein belongs to the UPF0677 family.

Functionally, exhibits S-adenosyl-L-methionine-dependent methyltransferase activity. The sequence is that of Putative S-adenosyl-L-methionine-dependent methyltransferase Mb1931c from Mycobacterium bovis (strain ATCC BAA-935 / AF2122/97).